The sequence spans 387 residues: Glucose-1-phosphate adenylyltransferase (387 aa).

Alpha-D-glucose 1-phosphate contacts are provided by residues tyrosine 99, glycine 164, 179 to 180 (EK), and serine 190.

This sequence belongs to the bacterial/plant glucose-1-phosphate adenylyltransferase family. Homotetramer.

The catalysed reaction is alpha-D-glucose 1-phosphate + ATP + H(+) = ADP-alpha-D-glucose + diphosphate. It functions in the pathway glycan biosynthesis; glycogen biosynthesis. In terms of biological role, involved in the biosynthesis of ADP-glucose, a building block required for the elongation reactions to produce glycogen. Catalyzes the reaction between ATP and alpha-D-glucose 1-phosphate (G1P) to produce pyrophosphate and ADP-Glc. This is Glucose-1-phosphate adenylyltransferase from Geobacillus stearothermophilus (Bacillus stearothermophilus).